A 21-amino-acid chain; its full sequence is Dahlein-5.6 (21 aa).

As to expression, expressed by the skin dorsal glands.

Its subcellular location is the secreted. In terms of biological role, has no antimicrobial activity. Strongly inhibits the formation of NO by neuronal nitric oxide synthase at micromolar concentrations. In Ranoidea dahlii (Dahl's aquatic frog), this protein is Dahlein-5.6.